The chain runs to 142 residues: Hemoglobin subunit alpha-1 (142 aa).

Residues 2–142 (KLTAEDKHNV…VAYVLASKYR (141 aa)) form the Globin domain. O2 is bound at residue histidine 59. Histidine 88 serves as a coordination point for heme b.

It belongs to the globin family. Major hemoglobin is a heterotetramer of two alpha-1 chains and two beta-1 chains. In terms of tissue distribution, red blood cells.

In terms of biological role, involved in oxygen transport from the lung to the various peripheral tissues. The chain is Hemoglobin subunit alpha-1 from Pleurodeles waltl (Iberian ribbed newt).